Reading from the N-terminus, the 162-residue chain is Mediator of RNA polymerase II transcription subunit 31 (162 aa).

The disordered stretch occupies residues 131 to 162 (VQGGQNVEAGDTGHNEGDQGTQQDKENIALKT). A compositionally biased stretch (basic and acidic residues) spans 141–162 (DTGHNEGDQGTQQDKENIALKT).

It belongs to the Mediator complex subunit 31 family. As to quaternary structure, component of the Mediator complex.

It localises to the nucleus. Its function is as follows. Component of the Mediator complex, a coactivator involved in the regulated transcription of nearly all RNA polymerase II-dependent genes. Mediator functions as a bridge to convey information from gene-specific regulatory proteins to the basal RNA polymerase II transcription machinery. Mediator is recruited to promoters by direct interactions with regulatory proteins and serves as a scaffold for the assembly of a functional preinitiation complex with RNA polymerase II and the general transcription factors. The chain is Mediator of RNA polymerase II transcription subunit 31 (soh1) from Aspergillus fumigatus (strain ATCC MYA-4609 / CBS 101355 / FGSC A1100 / Af293) (Neosartorya fumigata).